The primary structure comprises 785 residues: Semaphorin-3E (785 aa).

Positions 1–25 are cleaved as a signal peptide; it reads MLGRMASAQDLLILALCGLLLELPA. The Sema domain occupies 36 to 520; sequence RLRLSHKELW…TESVIAQVKF (485 aa). Residue Asn-48 is glycosylated (N-linked (GlcNAc...) asparagine). A disulfide bridge connects residues Cys-109 and Cys-119. Asn-130 is a glycosylation site (N-linked (GlcNAc...) asparagine). Disulfide bonds link Cys-137/Cys-146, Cys-274/Cys-386, Cys-298/Cys-346, and Cys-523/Cys-541. Asn-600 carries an N-linked (GlcNAc...) asparagine glycan. The Ig-like C2-type domain occupies 651–740; the sequence is LDAGTYFCQT…EYCEKVWCTD (90 aa). Cys-658 and Cys-733 form a disulfide bridge. A disordered region spans residues 744–785; the sequence is KKLKMSPSKWKYANPQEKRQDQEKKARIRPEHYRLPRNIADS. Residues 759 to 777 show a composition bias toward basic and acidic residues; it reads QEKRQDQEKKARIRPEHYR.

The protein belongs to the semaphorin family. In terms of tissue distribution, collapsin-1, -2, -3, and -5 bind to overlapping but distinct axon tracts.

The protein resides in the secreted. Functionally, plays an important role in signaling via the cell surface receptor PLXND1. Mediates reorganization of the actin cytoskeleton, leading to the retraction of cell projections. Promotes focal adhesion disassembly and inhibits adhesion of endothelial cells to the extracellular matrix. Regulates angiogenesis. Can down-regulate sprouting angiogenesis. Required for normal vascular patterning during embryogenesis. Induces the collapse and paralysis of neuronal growth cones. Plays an important role in ensuring the specificity of synapse formation. This chain is Semaphorin-3E (SEMA3E), found in Gallus gallus (Chicken).